Here is a 373-residue protein sequence, read N- to C-terminus: Transaldolase (373 aa).

Lysine 143 serves as the catalytic Schiff-base intermediate with substrate.

Belongs to the transaldolase family. Type 2 subfamily.

The protein resides in the cytoplasm. It carries out the reaction D-sedoheptulose 7-phosphate + D-glyceraldehyde 3-phosphate = D-erythrose 4-phosphate + beta-D-fructose 6-phosphate. Its pathway is carbohydrate degradation; pentose phosphate pathway; D-glyceraldehyde 3-phosphate and beta-D-fructose 6-phosphate from D-ribose 5-phosphate and D-xylulose 5-phosphate (non-oxidative stage): step 2/3. Its function is as follows. Transaldolase is important for the balance of metabolites in the pentose-phosphate pathway. The sequence is that of Transaldolase (tal) from Mycobacterium tuberculosis (strain ATCC 25618 / H37Rv).